A 65-amino-acid chain; its full sequence is Prokaryotic ubiquitin-like protein Pup (65 aa).

A compositionally biased stretch (basic and acidic residues) spans 1-14 (MSGHEQQRPSRREE). The tract at residues 1–35 (MSGHEQQRPSRREEDVEETPVVPAQAGAQAKESDA) is disordered. The ARC ATPase binding stretch occupies residues 21–59 (VVPAQAGAQAKESDADVDALLDEIDEVLESNSEEFVRGF). The stretch at 26-49 (AGAQAKESDADVDALLDEIDEVLE) forms a coiled coil. Glutamine 65 is subject to Deamidated glutamine. An Isoglutamyl lysine isopeptide (Gln-Lys) (interchain with K-? in acceptor proteins) cross-link involves residue glutamine 65.

This sequence belongs to the prokaryotic ubiquitin-like protein family. As to quaternary structure, strongly interacts with the proteasome-associated ATPase ARC through a hydrophobic interface; the interacting region of Pup lies in its C-terminal half. There is one Pup binding site per ARC hexamer ring. In terms of processing, is modified by deamidation of its C-terminal glutamine to glutamate by the deamidase Dop, a prerequisite to the subsequent pupylation process.

Its pathway is protein degradation; proteasomal Pup-dependent pathway. Protein modifier that is covalently attached to lysine residues of substrate proteins, thereby targeting them for proteasomal degradation. The tagging system is termed pupylation. The sequence is that of Prokaryotic ubiquitin-like protein Pup from Kineococcus radiotolerans (strain ATCC BAA-149 / DSM 14245 / SRS30216).